A 1199-amino-acid chain; its full sequence is DNA-directed RNA polymerase subunit beta' (1199 aa).

Zn(2+) is bound by residues Cys-60, Cys-62, Cys-75, and Cys-78. Mg(2+) contacts are provided by Asp-449, Asp-451, and Asp-453. Zn(2+) is bound by residues Cys-818, Cys-892, Cys-899, and Cys-902.

Belongs to the RNA polymerase beta' chain family. RNAP is composed of a core of 2 alpha, a beta and a beta' subunit. The core is associated with a delta subunit, and at least one of epsilon or omega. When a sigma factor is associated with the core the holoenzyme is formed, which can initiate transcription. The cofactor is Mg(2+). It depends on Zn(2+) as a cofactor.

It catalyses the reaction RNA(n) + a ribonucleoside 5'-triphosphate = RNA(n+1) + diphosphate. Functionally, DNA-dependent RNA polymerase catalyzes the transcription of DNA into RNA using the four ribonucleoside triphosphates as substrates. The protein is DNA-directed RNA polymerase subunit beta' of Bacillus subtilis (strain 168).